The primary structure comprises 605 residues: Class II receptor tyrosine kinase (605 aa).

In terms of domain architecture, Ig-like C2-type spans 1–67; it reads MWSSPGRNLE…DGESASFRVD (67 aa). Residues 1-84 lie on the Extracellular side of the membrane; sequence MWSSPGRNLE…GSNSGVIAGV (84 aa). N26, N44, and N72 each carry an N-linked (GlcNAc...) asparagine glycan. Residues 85–105 form a helical membrane-spanning segment; that stretch reads LITLLLLIALIIILICVFWVV. At 106-605 the chain is on the cytoplasmic side; sequence WRYRRRGKFD…GRPRGVAGCV (500 aa). Residues 209–230 form a disordered region; it reads EELSPIQEKPTRRNTGLSTYSQ. Positions 221–230 are enriched in polar residues; it reads RNTGLSTYSQ. The Protein kinase domain maps to 346-605; the sequence is IREVKQIGVG…GRPRGVAGCV (260 aa). ATP contacts are provided by residues 352-360 and K393; that span reads IGVGQFGAV. D496 acts as the Proton acceptor in catalysis. A Phosphotyrosine; by autocatalysis modification is found at Y527.

It belongs to the protein kinase superfamily. Tyr protein kinase family. Insulin receptor subfamily. In terms of processing, phosphorylated.

The protein resides in the cell membrane. It catalyses the reaction L-tyrosyl-[protein] + ATP = O-phospho-L-tyrosyl-[protein] + ADP + H(+). This chain is Class II receptor tyrosine kinase (TK), found in Geodia cydonium (Sponge).